The primary structure comprises 554 residues: Solute carrier family 22 member 1 (554 aa).

At 1 to 24 the chain is on the cytoplasmic side; the sequence is MPSVDDVLEQVGEFGWFQKQAFLN. A helical transmembrane segment spans residues 25–45; that stretch reads LCLTSVAFAPIYVGIVFLGFT. Topologically, residues 46 to 234 are extracellular; the sequence is PDHRCRSPGV…EFVGLGYRKT (189 aa). N-linked (GlcNAc...) asparagine glycosylation occurs at Asn-71. A helical transmembrane segment spans residues 235 to 255; it reads VAILYQTAFSVGLVLLSGLAY. Residues 256-261 are Cytoplasmic-facing; sequence AVPHWR. The helical transmembrane segment at 262–282 threads the bilayer; it reads SLQLAVSLPIFLLLLCYWFVP. Residues 282–286 carry the Proline-rich sequence motif; sequence PESPR. The Extracellular segment spans residues 283–347; sequence ESPRWLLSQK…FRTQNLRKYT (65 aa). At Ser-333 the chain carries Phosphoserine. A helical membrane pass occupies residues 348 to 368; sequence FILMYLWFTSSVLYQGLIMHV. At 369–376 the chain is on the cytoplasmic side; it reads GATGGSLY. Residues 377–397 form a helical membrane-spanning segment; it reads LDFLYSALVEFPAAFVILLII. Residues 398–402 are Extracellular-facing; it reads DRFGR. A helical transmembrane segment spans residues 403-423; it reads LYLLAGSNLLAGAACFFMIFI. Over 424 to 431 the chain is Cytoplasmic; that stretch reads SHDLHWLS. Residues 432-452 form a helical membrane-spanning segment; sequence IVAACIGRMGITIVFQMVCLV. The Extracellular segment spans residues 453–464; sequence SAELYPTFIRNL. A helical membrane pass occupies residues 465-485; it reads GVMVCSSLCDLGGVVAPFLVF. The Cytoplasmic portion of the chain corresponds to 486 to 492; the sequence is RLTEVWR. Residues 493-513 traverse the membrane as a helical segment; the sequence is GLPLVLFAALGLVAGGMSLLL. The Extracellular segment spans residues 514 to 554; sequence PETKGVALPETIEEVERLGRKAKPRDNMIYLQVKMPEPAGL.

The protein belongs to the major facilitator (TC 2.A.1) superfamily. Organic cation transporter (TC 2.A.1.19) family. Post-translationally, phosphorylated.

It localises to the basolateral cell membrane. The protein localises to the apical cell membrane. It is found in the lateral cell membrane. Its subcellular location is the basal cell membrane. The protein resides in the cell membrane. It catalyses the reaction 1-methylnicotinamide(out) = 1-methylnicotinamide(in). The catalysed reaction is dopamine(out) = dopamine(in). It carries out the reaction serotonin(out) = serotonin(in). The enzyme catalyses (R)-adrenaline(out) = (R)-adrenaline(in). It catalyses the reaction (R)-noradrenaline(out) = (R)-noradrenaline(in). The catalysed reaction is histamine(out) = histamine(in). It carries out the reaction guanidine(out) = guanidine(in). The enzyme catalyses choline(out) = choline(in). It catalyses the reaction acetylcholine(in) = acetylcholine(out). The catalysed reaction is thiamine(in) = thiamine(out). It carries out the reaction spermidine(in) = spermidine(out). The enzyme catalyses agmatine(out) = agmatine(in). It catalyses the reaction putrescine(out) = putrescine(in). The catalysed reaction is (R)-carnitine(in) = (R)-carnitine(out). It carries out the reaction O-isobutanoyl-(R)-carnitine(in) = O-isobutanoyl-(R)-carnitine(out). The enzyme catalyses O-acetyl-(R)-carnitine(in) = O-acetyl-(R)-carnitine(out). It catalyses the reaction O-3-hydroxybutanoyl-(R)-carnitine(in) = O-3-hydroxybutanoyl-(R)-carnitine(out). The catalysed reaction is O-propanoyl-(R)-carnitine(in) = O-propanoyl-(R)-carnitine(out). It carries out the reaction O-butanoyl-(R)-carnitine(in) = O-butanoyl-(R)-carnitine(out). The enzyme catalyses O-2-methylbutanoyl-(R)-carnitine(in) = O-2-methylbutanoyl-(R)-carnitine(out). It catalyses the reaction O-3-methylbutanoyl-(R)-carnitine(in) = O-3-methylbutanoyl-(R)-carnitine(out). The catalysed reaction is O-hexanoyl-(R)-carnitine(in) = O-hexanoyl-(R)-carnitine(out). It carries out the reaction L-histidyl-L-proline diketopiperazine(in) = L-histidyl-L-proline diketopiperazine(out). The enzyme catalyses (R)-salsolinol(in) = (R)-salsolinol(out). It catalyses the reaction prostaglandin F2alpha(out) = prostaglandin F2alpha(in). The catalysed reaction is prostaglandin E2(out) = prostaglandin E2(in). With respect to regulation, phosphorylation of the transporter leads to changes in its substrate affinity, resulting in a regulation of the transport activity. In contrast with rat ortholog, ASP uptake is inhibited by protein kinase A (PKA) and C (PKC) activation. ASP uptake is also endogenously activated by calmodulin, the calmodulin-dependent kinase II and LCK tyrosine kinase. Inhibited by cGMP, most likely through a cGMP-binding protein that interacts with OCT1. In terms of biological role, electrogenic voltage-dependent transporter that mediates the transport of a variety of organic cations such as endogenous bioactive amines, cationic drugs and xenobiotics. Functions as a pH- and Na(+)-independent, bidirectional transporter. Cation cellular uptake or release is driven by the electrochemical potential (i.e. membrane potential and concentration gradient) and substrate selectivity. Hydrophobicity is a major requirement for recognition in polyvalent substrates and inhibitors. Primarily expressed in the basolateral membrane of hepatocytes and proximal tubules and involved in the uptake and disposition of cationic compounds from the blood by hepatic and renal clearance. Most likely functions as an uptake carrier in enterocytes contributing to the intestinal elimination of organic cations from the systemic circulation. Transports endogenous monoamines such as N-1-methylnicotinamide (NMN), guanidine, neurotransmitters dopamine, serotonin, noradrenaline, adrenaline and histamine, and quaternary ammonium compound such as choline. Also transports natural polyamines such as spermidine, agmatine and putrescine at low affinity, but relatively high turnover. Involved in the hepatic and intestinal uptake of the vitamin B1/thiamine, hence regulating hepatic lipid and energy metabolism. Contributes to the influx and efflux of fatty acid carriers carnitines and acylcarnitines across the basolateral membrane of hepatocytes, from the liver to the systemic circulation and inversely and may be involved in regulating the systemic availability of hepatic acylcarnitines. Also capable of transporting non-amine endogenous compounds such as prostaglandin E2 (PGE2) and prostaglandin F2-alpha (PGF2-alpha). May contribute to the transport of cationic compounds in testes across the blood-testis-barrier. Also mediates the uptake of xenobiotics tributylmethylammonium (TBuMA), quinidine, N-methyl-quinine (NMQ), N-methyl-quinidine (NMQD) N-(4,4-azo-n-pentyl)-quinuclidine (APQ), azidoprocainamide methoiodide (AMP), N-(4,4-azo-n-pentyl)-21-deoxyajmalinium (APDA) and 4-(4-(dimethylamino)styryl)-N-methylpyridinium (ASP). The chain is Solute carrier family 22 member 1 (SLC22A1) from Sus scrofa (Pig).